The primary structure comprises 834 residues: Pentatricopeptide repeat-containing protein At4g39530 (834 aa).

19 PPR repeats span residues 78–112 (DTYL…NLVS), 113–144 (WSTM…KDSP), 145–181 (NEYI…GFDR), 182–212 (DVYV…LPEK), 213–247 (STVT…NVVP), 248–282 (DGYI…GLEM), 283–313 (DASL…MPNK), 314–348 (NIIS…GLKP), 349–383 (DMYA…NLGN), 384–414 (DSYV…FAAA), 415–452 (DVVL…LIRP), 453–487 (SLLT…GLNL), 488–518 (DIFA…MKVK), 519–553 (DLVI…RERP), 554–588 (DEFT…GLEC), 589–619 (NPYI…AASR), 620–654 (DVVC…GIEP), 655–689 (NYIT…GIEP), and 690–720 (ETEH…MPTK). The tract at residues 725–800 (VWRSLLSGCA…EPGRSWIGIN (76 aa)) is type E motif. Residues 801 to 831 (KEVHIFLSKDKSHCKANQIYEVLDDLLVQIR) form a type E(+) motif region.

It belongs to the PPR family. PCMP-E subfamily.

In Arabidopsis thaliana (Mouse-ear cress), this protein is Pentatricopeptide repeat-containing protein At4g39530 (PCMP-E52).